The chain runs to 841 residues: Nuclear RNA export factor 2 (841 aa).

The tract at residues 1 to 285 (MPNQMRVLDF…NFELVDGKPF (285 aa)) is RNA-binding unit probably involved in Piwi-dependent recruitment and single-stranded RNA-PPNP complex formation. LRR repeat units lie at residues 200 to 221 (RLNG…TLLA), 224 to 245 (DYAL…CRAL), and 249 to 270 (RARE…PANI). The necessary for silencing function stretch occupies residues 286–553 (NMLHKIFSPL…EYVRAVKEVF (268 aa)). The 84-residue stretch at 325–408 (WHAFMIPDPS…IFRYYLRMNV (84 aa)) folds into the RRM domain. 3 LRR repeats span residues 475–496 (TCSE…HVLG), 500–521 (CLRA…HSLG), and 524–545 (PLKS…PSEY). An NTF2 domain is found at 585 to 758 (LVGAFLENYL…LKIANERLHI (174 aa)). The TAP-C domain maps to 788 to 841 (DVKDHKLLLFQEVTGLISTWVTSIVEEADWDFERALKLFIQKNADHEIPDLAFA).

Belongs to the NXF family. In terms of assembly, in the ovaries, part of a complex composed of at least Panx, nxf2, piwi and Nxt1. The complex is knowns as Panx-induced cotranscriptional silencing (PICTS) complex, Panx-nxf2-dependent TAP/p15 silencing (Pandas complex), SFiNX (silencing factor interacting nuclear export variant) or piwi-Panx-nxf2-p15 (PPNP) complex. Interacts (via TAP-C domain) with Panx (via NIR region); the interaction is direct. Interacts (via NTF2 domain) with Nxt1; the interaction is direct and prevents Nxt1 binding to nucleoporins. Interacts with sbr/Nxf1. As to expression, expressed in female gonads (at protein level). Expressed ubiquitously.

It is found in the cytoplasm. The protein localises to the nucleus. The protein resides in the nucleoplasm. Its function is as follows. May be involved in the export of mRNA from the nucleus to the cytoplasm. In the ovaries, forms a complex with nxf2, piwi and Nxt1 which acts as effectors of cotranscriptional transposon silencing. On recruitment to a target transcript, interacts with single stranded RNA, thereby anchoring the complex via the nascent target transcript to chromatin and allowing Panx to recruit silencing effectors to establishing repressive heterochromatin at transposon loci. Does not affect piRNA biogenesis. The interaction with Panx stabilizes the nuclear protein complex. Does not bind nucleoporins, but regulates sbr/Nxf1 binding to nucleoporins and, indirectly, transposon exports. This is Nuclear RNA export factor 2 (nxf2) from Drosophila melanogaster (Fruit fly).